A 307-amino-acid polypeptide reads, in one-letter code: Polysialic acid O-acetyltransferase (307 aa).

The span at 1 to 90 (MLRLKTQDSR…LKTQDSRLKT (90 aa)) shows a compositional bias: basic and acidic residues. The disordered stretch occupies residues 1-95 (MLRLKTQDSR…SRLKTQDSFS (95 aa)). A run of 13 repeats spans residues 3–9 (RLKTQDS), 10–16 (RLKTQDS), 17–23 (RLKTQDS), 24–30 (RLKTQDS), 31–37 (RLKTQDS), 38–44 (RLKTQDS), 45–51 (RLKTQDS), 52–58 (RLKTQDS), 59–65 (RLKTQDS), 66–72 (RLKTQDS), 73–79 (RLKTQDS), 80–86 (RLKTQDS), and 87–93 (RLKTQDS). Residues 3 to 93 (RLKTQDSRLK…QDSRLKTQDS (91 aa)) are 13 X 7 AA tandem repeat of RLKTQDS encoded by a 7 nucleotide repeat. Residues 208–210 (DGH), Arg-237, Lys-243, Lys-261, and Lys-278 contribute to the acetyl-CoA site.

The protein belongs to the transferase hexapeptide repeat family. In terms of assembly, homotrimer. Hexamer formed by two homotrimers.

It catalyses the reaction [N-acetyl-alpha-D-neuraminosyl-(2-&gt;8)](n) + n acetyl-CoA = [N,O(9)-diacetyl-alpha-D-neuraminosyl-(2-&gt;8)](n) + n CoA. The enzyme catalyses [N-acetyl-alpha-D-neuraminosyl-(2-&gt;8)](n) + n acetyl-CoA = [O(7),N-diacetyl-alpha-D-neuraminosyl-(2-&gt;8)](n) + n CoA. Its function is as follows. Catalyzes the O-acetylation of capsular polymeric sialic acid. Shows high substrate specificity toward polymers of sialic acid that contains a large number of residues. The chain is Polysialic acid O-acetyltransferase from Escherichia coli O1:K1 / APEC.